The sequence spans 501 residues: GTPase Obg (501 aa).

The Obg domain occupies 2–159 (NRFIDRVVLH…HDLILELKSM (158 aa)). The region spanning 160–341 (ADVGLVGFPS…LKYKLLEIVQ (182 aa)) is the OBG-type G domain. GTP is bound by residues 166 to 173 (GFPSAGKS), 191 to 195 (FTTLQ), 212 to 215 (DVPG), 292 to 295 (NKAD), and 322 to 324 (SAV). Residues Ser173 and Thr193 each contribute to the Mg(2+) site. The OCT domain occupies 362 to 442 (VDHRTKGQFQ…IGGISFEWEP (81 aa)).

The protein belongs to the TRAFAC class OBG-HflX-like GTPase superfamily. OBG GTPase family. Monomer. Requires Mg(2+) as cofactor.

Its subcellular location is the cytoplasm. In terms of biological role, an essential GTPase which binds GTP, GDP and possibly (p)ppGpp with moderate affinity, with high nucleotide exchange rates and a fairly low GTP hydrolysis rate. Plays a role in control of the cell cycle, stress response, ribosome biogenesis and in those bacteria that undergo differentiation, in morphogenesis control. This Corynebacterium glutamicum (strain R) protein is GTPase Obg.